A 234-amino-acid chain; its full sequence is Enolase-phosphatase E1 (234 aa).

Mg(2+)-binding residues include D10 and E12. Substrate-binding positions include 125 to 126 (SS) and K162. D188 contributes to the Mg(2+) binding site.

The protein belongs to the HAD-like hydrolase superfamily. MasA/MtnC family. In terms of assembly, monomer. Mg(2+) serves as cofactor.

The protein resides in the cytoplasm. It localises to the nucleus. The catalysed reaction is 5-methylsulfanyl-2,3-dioxopentyl phosphate + H2O = 1,2-dihydroxy-5-(methylsulfanyl)pent-1-en-3-one + phosphate. The protein operates within amino-acid biosynthesis; L-methionine biosynthesis via salvage pathway; L-methionine from S-methyl-5-thio-alpha-D-ribose 1-phosphate: step 3/6. It participates in amino-acid biosynthesis; L-methionine biosynthesis via salvage pathway; L-methionine from S-methyl-5-thio-alpha-D-ribose 1-phosphate: step 4/6. Bifunctional enzyme that catalyzes the enolization of 2,3-diketo-5-methylthiopentyl-1-phosphate (DK-MTP-1-P) into the intermediate 2-hydroxy-3-keto-5-methylthiopentenyl-1-phosphate (HK-MTPenyl-1-P), which is then dephosphorylated to form the acireductone 1,2-dihydroxy-3-keto-5-methylthiopentene (DHK-MTPene). This chain is Enolase-phosphatase E1, found in Sordaria macrospora (strain ATCC MYA-333 / DSM 997 / K(L3346) / K-hell).